Consider the following 369-residue polypeptide: Histidinol-phosphate aminotransferase 2 (369 aa).

Residue Lys231 is modified to N6-(pyridoxal phosphate)lysine.

Belongs to the class-II pyridoxal-phosphate-dependent aminotransferase family. Histidinol-phosphate aminotransferase subfamily. In terms of assembly, homodimer. The cofactor is pyridoxal 5'-phosphate.

It carries out the reaction L-histidinol phosphate + 2-oxoglutarate = 3-(imidazol-4-yl)-2-oxopropyl phosphate + L-glutamate. The protein operates within amino-acid biosynthesis; L-histidine biosynthesis; L-histidine from 5-phospho-alpha-D-ribose 1-diphosphate: step 7/9. In Legionella pneumophila (strain Paris), this protein is Histidinol-phosphate aminotransferase 2.